Here is a 165-residue protein sequence, read N- to C-terminus: uncharacterized protein (165 aa).

A disordered region spans residues 68–107; the sequence is LEGAPEWAAPHPEEQRRSPPACSQHTPPLPSTPTGPPPCS. A compositionally biased stretch (pro residues) spans 94–107; sequence PPLPSTPTGPPPCS.

This is an uncharacterized protein from Homo sapiens (Human).